Reading from the N-terminus, the 111-residue chain is uncharacterized protein (111 aa).

The next 3 helical transmembrane spans lie at 4–22, 49–71, and 91–108; these read FWILMLIAITISLASQFFI, LLILFVFSLSFFPVEYLLLLFFI, and YMYHIVEVSLMFMLLIYV.

It is found in the cell membrane. This is an uncharacterized protein from Bacillus subtilis (strain 168).